A 199-amino-acid chain; its full sequence is MFTPPLARLIEQLQRLPGVGPKTAQRLALHILKRPEEEVNTLAKAIVEAKKQVGLCQVCFHLSAESTCEICRNPNRDNQTLCVVADSRDVIALEKTREYQGKYHVLGGVISPMDGIGPEQLNISPLVRRVSQHQIKEVILAISPSVEGETTTLYVGQLLKPFTKVTRIAFGLPMGGDLEYADEVTLARALEGRRELDYN.

The C4-type zinc-finger motif lies at 56-71 (CQVCFHLSAESTCEIC). The region spanning 79–173 (QTLCVVADSR…KVTRIAFGLP (95 aa)) is the Toprim domain.

It belongs to the RecR family.

In terms of biological role, may play a role in DNA repair. It seems to be involved in an RecBC-independent recombinational process of DNA repair. It may act with RecF and RecO. The sequence is that of Recombination protein RecR from Gloeothece citriformis (strain PCC 7424) (Cyanothece sp. (strain PCC 7424)).